Here is a 609-residue protein sequence, read N- to C-terminus: Dihydroxy-acid dehydratase 1 (609 aa).

Residue Asp81 participates in Mg(2+) binding. Cys122 is a [2Fe-2S] cluster binding site. Residues Asp123 and Lys124 each coordinate Mg(2+). N6-carboxylysine is present on Lys124. Cys195 lines the [2Fe-2S] cluster pocket. Mg(2+) is bound at residue Glu491. Ser517 functions as the Proton acceptor in the catalytic mechanism.

It belongs to the IlvD/Edd family. Homodimer. The cofactor is [2Fe-2S] cluster. Requires Mg(2+) as cofactor.

The enzyme catalyses (2R)-2,3-dihydroxy-3-methylbutanoate = 3-methyl-2-oxobutanoate + H2O. The catalysed reaction is (2R,3R)-2,3-dihydroxy-3-methylpentanoate = (S)-3-methyl-2-oxopentanoate + H2O. It functions in the pathway amino-acid biosynthesis; L-isoleucine biosynthesis; L-isoleucine from 2-oxobutanoate: step 3/4. Its pathway is amino-acid biosynthesis; L-valine biosynthesis; L-valine from pyruvate: step 3/4. Its function is as follows. Functions in the biosynthesis of branched-chain amino acids. Catalyzes the dehydration of (2R,3R)-2,3-dihydroxy-3-methylpentanoate (2,3-dihydroxy-3-methylvalerate) into 2-oxo-3-methylpentanoate (2-oxo-3-methylvalerate) and of (2R)-2,3-dihydroxy-3-methylbutanoate (2,3-dihydroxyisovalerate) into 2-oxo-3-methylbutanoate (2-oxoisovalerate), the penultimate precursor to L-isoleucine and L-valine, respectively. This Acinetobacter baylyi (strain ATCC 33305 / BD413 / ADP1) protein is Dihydroxy-acid dehydratase 1.